Consider the following 381-residue polypeptide: Queuine tRNA-ribosyltransferase (381 aa).

Aspartate 103 functions as the Proton acceptor in the catalytic mechanism. Substrate contacts are provided by residues 103 to 107 (DSGGF), aspartate 157, glutamine 200, and glycine 227. The tract at residues 258–264 (GVGTYRE) is RNA binding. The Nucleophile role is filled by aspartate 277. Residues 282–286 (TRLAR) are RNA binding; important for wobble base 34 recognition. 4 residues coordinate Zn(2+): cysteine 315, cysteine 317, cysteine 320, and histidine 346.

Belongs to the queuine tRNA-ribosyltransferase family. Homodimer. Within each dimer, one monomer is responsible for RNA recognition and catalysis, while the other monomer binds to the replacement base PreQ1. Requires Zn(2+) as cofactor.

It catalyses the reaction 7-aminomethyl-7-carbaguanine + guanosine(34) in tRNA = 7-aminomethyl-7-carbaguanosine(34) in tRNA + guanine. It participates in tRNA modification; tRNA-queuosine biosynthesis. Functionally, catalyzes the base-exchange of a guanine (G) residue with the queuine precursor 7-aminomethyl-7-deazaguanine (PreQ1) at position 34 (anticodon wobble position) in tRNAs with GU(N) anticodons (tRNA-Asp, -Asn, -His and -Tyr). Catalysis occurs through a double-displacement mechanism. The nucleophile active site attacks the C1' of nucleotide 34 to detach the guanine base from the RNA, forming a covalent enzyme-RNA intermediate. The proton acceptor active site deprotonates the incoming PreQ1, allowing a nucleophilic attack on the C1' of the ribose to form the product. After dissociation, two additional enzymatic reactions on the tRNA convert PreQ1 to queuine (Q), resulting in the hypermodified nucleoside queuosine (7-(((4,5-cis-dihydroxy-2-cyclopenten-1-yl)amino)methyl)-7-deazaguanosine). The polypeptide is Queuine tRNA-ribosyltransferase (Cyanothece sp. (strain PCC 7425 / ATCC 29141)).